Reading from the N-terminus, the 917-residue chain is Probable dipeptidyl-aminopeptidase B (917 aa).

The disordered stretch occupies residues 1–75 (MTVGRRLNDE…KYRDDVEEDW (75 aa)). Over 1-93 (MTVGRRLNDE…NAKPSQRRTQ (93 aa)) the chain is Cytoplasmic. Over residues 27 to 39 (DSSSTASVSLTLV) the composition is skewed to low complexity. A compositionally biased stretch (polar residues) spans 40-49 (DGTNHTTAKP). Residues 57–69 (VSRDRYADEKYRD) are compositionally biased toward basic and acidic residues. The helical; Signal-anchor for type II membrane protein transmembrane segment at 94–114 (IVFWLLVALCVGGWAVAFLFF) threads the bilayer. The Vacuolar segment spans residues 115–917 (VTSPGNTIST…KRVIRRLLHR (803 aa)). Over residues 124-133 (TTPDTGSGSP) the composition is skewed to polar residues. The segment at 124 to 150 (TTPDTGSGSPDSDVIKPGSPPAGKKIP) is disordered. N-linked (GlcNAc...) asparagine glycosylation is found at Asn-206, Asn-302, and Asn-354. Ser-759 acts as the Charge relay system in catalysis. N-linked (GlcNAc...) asparagine glycosylation occurs at Asn-818. Active-site charge relay system residues include Asp-836 and His-869.

Belongs to the peptidase S9B family.

The protein resides in the vacuole membrane. The enzyme catalyses Release of an N-terminal dipeptide, Xaa-Yaa-|-Zaa-, from a polypeptide, preferentially when Yaa is Pro, provided Zaa is neither Pro nor hydroxyproline.. Its function is as follows. Type IV dipeptidyl-peptidase which removes N-terminal dipeptides sequentially from polypeptides having unsubstituted N-termini provided that the penultimate residue is proline. The protein is Probable dipeptidyl-aminopeptidase B (DAPB) of Arthroderma gypseum (strain ATCC MYA-4604 / CBS 118893) (Microsporum gypseum).